Reading from the N-terminus, the 540-residue chain is Probable H/ACA ribonucleoprotein complex subunit 4 (540 aa).

The interval 1–24 (MTTDKKSKSKSSEKSTQEVEQVIK) is disordered. The active-site Nucleophile is the D109. Residues 280–355 (YKRIVVKDSA…VVATIKRVIM (76 aa)) enclose the PUA domain. Positions 414-540 (SPVESMNVDT…DKKEKKKSKN (127 aa)) are disordered. Positions 448–494 (KKEKKDKKEKKKDSSDDESEEEKSSKKDKKEKKEKKEKKEKKSSKDD) form a coiled coil. The span at 473 to 489 (KKDKKEKKEKKEKKEKK) shows a compositional bias: basic residues. Composition is skewed to basic and acidic residues over residues 490–503 (SSKD…SKKE) and 513–528 (SDKD…DKKD). Basic residues predominate over residues 529 to 540 (KKDKKEKKKSKN).

It belongs to the pseudouridine synthase TruB family. As to quaternary structure, component of the small nucleolar ribonucleoprotein particles containing H/ACA-type snoRNAs (H/ACA snoRNPs).

The protein localises to the nucleus. The protein resides in the nucleolus. It catalyses the reaction a uridine in RNA = a pseudouridine in RNA. In terms of biological role, plays a central role in ribosomal RNA processing. Probable catalytic subunit of H/ACA small nucleolar ribonucleoprotein (H/ACA snoRNP) complex, which catalyzes pseudouridylation of rRNA. This involves the isomerization of uridine such that the ribose is subsequently attached to C5, instead of the normal N1. Pseudouridine ('psi') residues may serve to stabilize the conformation of rRNAs. The chain is Probable H/ACA ribonucleoprotein complex subunit 4 (nola4) from Dictyostelium discoideum (Social amoeba).